Reading from the N-terminus, the 397-residue chain is Phosphoglycerate kinase (397 aa).

Substrate is bound by residues 21 to 23 (DFN), R37, 60 to 63 (HLGR), R119, and R152. ATP contacts are provided by residues K203, G294, E325, and 354–357 (GGDS).

The protein belongs to the phosphoglycerate kinase family. Monomer.

It localises to the cytoplasm. It carries out the reaction (2R)-3-phosphoglycerate + ATP = (2R)-3-phospho-glyceroyl phosphate + ADP. Its pathway is carbohydrate degradation; glycolysis; pyruvate from D-glyceraldehyde 3-phosphate: step 2/5. The sequence is that of Phosphoglycerate kinase from Chlorobium luteolum (strain DSM 273 / BCRC 81028 / 2530) (Pelodictyon luteolum).